The sequence spans 463 residues: ATP synthase subunit beta 1 (463 aa).

152-159 (GGAGVGKT) is a binding site for ATP.

The protein belongs to the ATPase alpha/beta chains family. In terms of assembly, F-type ATPases have 2 components, CF(1) - the catalytic core - and CF(0) - the membrane proton channel. CF(1) has five subunits: alpha(3), beta(3), gamma(1), delta(1), epsilon(1). CF(0) has three main subunits: a(1), b(2) and c(9-12). The alpha and beta chains form an alternating ring which encloses part of the gamma chain. CF(1) is attached to CF(0) by a central stalk formed by the gamma and epsilon chains, while a peripheral stalk is formed by the delta and b chains.

Its subcellular location is the cell inner membrane. It carries out the reaction ATP + H2O + 4 H(+)(in) = ADP + phosphate + 5 H(+)(out). Its function is as follows. Produces ATP from ADP in the presence of a proton gradient across the membrane. The catalytic sites are hosted primarily by the beta subunits. The protein is ATP synthase subunit beta 1 of Shewanella frigidimarina (strain NCIMB 400).